We begin with the raw amino-acid sequence, 250 residues long: Putative ABC transporter ATP-binding protein YjkB (250 aa).

Residues 13-245 (ISFRSVRKSY…PQHEAAKEFL (233 aa)) form the ABC transporter domain. An ATP-binding site is contributed by 49–56 (GPSGSGKS).

The protein belongs to the ABC transporter superfamily.

This is Putative ABC transporter ATP-binding protein YjkB (yjkB) from Bacillus subtilis (strain 168).